Consider the following 82-residue polypeptide: Protein Rv1078A (82 aa).

Basic residues predominate over residues 35-54; the sequence is GGPTRRLRRRPAVTRRRRPD. The disordered stretch occupies residues 35 to 82; the sequence is GGPTRRLRRRPAVTRRRRPDRRFVRCRPSPTRRGLPGCWRHSSTGPHT.

Its subcellular location is the cytoplasm. This is Protein Rv1078A from Mycobacterium tuberculosis (strain ATCC 25618 / H37Rv).